A 241-amino-acid polypeptide reads, in one-letter code: Eukaryotic translation initiation factor 3 subunit J (241 aa).

Residues M1 to K97 form a disordered region. Residues G28–L45 are compositionally biased toward acidic residues. Residues E31–T119 are a coiled coil. Basic and acidic residues-rich tracts occupy residues E46–K58 and I69–K87.

This sequence belongs to the eIF-3 subunit J family. As to quaternary structure, component of the eukaryotic translation initiation factor 3 (eIF-3) complex.

The protein localises to the cytoplasm. In terms of biological role, component of the eukaryotic translation initiation factor 3 (eIF-3) complex, which is involved in protein synthesis of a specialized repertoire of mRNAs and, together with other initiation factors, stimulates binding of mRNA and methionyl-tRNAi to the 40S ribosome. The eIF-3 complex specifically targets and initiates translation of a subset of mRNAs involved in cell proliferation. The polypeptide is Eukaryotic translation initiation factor 3 subunit J (Aedes aegypti (Yellowfever mosquito)).